We begin with the raw amino-acid sequence, 354 residues long: Protein RecA (354 aa).

67–74 (GPESSGKT) contributes to the ATP binding site. The tract at residues 331–354 (NQDSTPDFSVDDNGEGVKETNEDF) is disordered. Residues 345–354 (EGVKETNEDF) are compositionally biased toward basic and acidic residues.

This sequence belongs to the RecA family.

Its subcellular location is the cytoplasm. Functionally, can catalyze the hydrolysis of ATP in the presence of single-stranded DNA, the ATP-dependent uptake of single-stranded DNA by duplex DNA, and the ATP-dependent hybridization of homologous single-stranded DNAs. It interacts with LexA causing its activation and leading to its autocatalytic cleavage. The polypeptide is Protein RecA (Citrobacter koseri (strain ATCC BAA-895 / CDC 4225-83 / SGSC4696)).